Reading from the N-terminus, the 431-residue chain is U-box domain-containing protein 20 (431 aa).

Positions 32 to 106 constitute a U-box domain; that stretch reads TIPSQFQCPI…QGWCGSSLGG (75 aa).

The catalysed reaction is S-ubiquitinyl-[E2 ubiquitin-conjugating enzyme]-L-cysteine + [acceptor protein]-L-lysine = [E2 ubiquitin-conjugating enzyme]-L-cysteine + N(6)-ubiquitinyl-[acceptor protein]-L-lysine.. It participates in protein modification; protein ubiquitination. Its function is as follows. Functions as an E3 ubiquitin ligase. The sequence is that of U-box domain-containing protein 20 (PUB20) from Arabidopsis thaliana (Mouse-ear cress).